The sequence spans 181 residues: Diphosphoinositol polyphosphate phosphohydrolase NUDT4B (181 aa).

Substrate contacts are provided by residues Arg10, 18–20 (KKR), and 39–41 (SSR). The region spanning 18–145 (KKRAACLCFR…VHAEYLEKLK (128 aa)) is the Nudix hydrolase domain. Mg(2+)-binding residues include Gly50 and Glu66. The Nudix box signature appears at 51–72 (GGMEPEEEPGGAAVREVYEEAG). Glu69 serves as the catalytic Proton acceptor. Glu70 is a Mg(2+) binding site. Substrate contacts are provided by residues 90–92 (RKH), Arg116, and Lys134.

Belongs to the Nudix hydrolase family. DIPP subfamily. It depends on Mg(2+) as a cofactor. The cofactor is Mn(2+).

It localises to the cytoplasm. It carries out the reaction diphospho-myo-inositol polyphosphate + H2O = myo-inositol polyphosphate + phosphate.. In terms of biological role, cleaves a beta-phosphate from the diphosphate groups in PP-InsP5 (diphosphoinositol pentakisphosphate), PP-InsP4 and [PP]2-InsP4 (bisdiphosphoinositol tetrakisphosphate), suggesting that it may play a role in signal transduction. Also able to catalyze the hydrolysis of dinucleoside oligophosphate Ap6A, but not Ap5A. The major reaction products are ADP and p4a from Ap6A. Also able to hydrolyze 5-phosphoribose 1-diphosphate. Does not play a role in U8 snoRNA decapping activity. Binds U8 snoRNA. The sequence is that of Diphosphoinositol polyphosphate phosphohydrolase NUDT4B from Homo sapiens (Human).